Reading from the N-terminus, the 331-residue chain is FMRFamide-related neuropeptides (331 aa).

The first 25 residues, 1–25, serve as a signal peptide directing secretion; sequence MRCWSPCSLLVVIVIYCLSSHTSEA. A propeptide spanning residues 26-65 is cleaved from the precursor; it reads FDLAQACVESQRLSLLPICDTIFAVQQEGAQQSADDGMRS. 2 positions are modified to phenylalanine amide: phenylalanine 71 and phenylalanine 83. Residues 86-94 constitute a propeptide that is removed on maturation; that stretch reads NVPDLPFED. A Phenylalanine amide modification is found at phenylalanine 100. Positions 103-168 are excised as a propeptide; the sequence is AAPQLDDLLK…YIDDVEDSDV (66 aa). The interval 122–158 is disordered; it reads QKADETSVRRKRSTDAAPQNNAENPEQKNDSAKITKR. The segment covering 146-158 has biased composition (basic and acidic residues); it reads PEQKNDSAKITKR. 2 positions are modified to phenylalanine amide: phenylalanine 174 and phenylalanine 181. The propeptide occupies 184–194; the sequence is NPSDAGNKLTE. Phenylalanine 200 is modified (phenylalanine amide). Positions 203–205 are excised as a propeptide; it reads DPE. Phenylalanine 211 carries the post-translational modification Phenylalanine amide. A propeptide spanning residues 214–216 is cleaved from the precursor; sequence SDD. Phenylalanine 222 is modified (phenylalanine amide). Positions 225 to 236 are excised as a propeptide; that stretch reads NPSDVEDELEED. Phenylalanine 242 carries the post-translational modification Phenylalanine amide. A propeptide spanning residues 245–254 is cleaved from the precursor; that stretch reads GGEDDEEEAE. Phenylalanine 260 is subject to Phenylalanine amide. Positions 263-265 are excised as a propeptide; the sequence is DPE. Phenylalanine 271 is subject to Phenylalanine amide. A propeptide spanning residues 274-277 is cleaved from the precursor; the sequence is SGED. A compositionally biased stretch (basic and acidic residues) spans 282–296; it reads RFGRNPDEQEADKRF. Positions 282–310 are disordered; it reads RFGRNPDEQEADKRFMRFGRGGEDDEVST. Residue phenylalanine 283 is modified to Phenylalanine amide. A propeptide spanning residues 286–293 is cleaved from the precursor; sequence NPDEQEAD. Phenylalanine 299 is subject to Phenylalanine amide. A propeptide spanning residues 302–312 is cleaved from the precursor; sequence GGEDDEVSTED. Phenylalanine 318 is modified (phenylalanine amide). Residues 321-331 constitute a propeptide that is removed on maturation; it reads SADKCKGCLEG.

It belongs to the FARP (FMRFamide related peptide) family.

It localises to the secreted. Excitatory neurotransmitters that directly modulate chromatophore function by activating chromatophore expansion at the chromatophore neuromuscular junction. In Doryteuthis pealeii (Longfin inshore squid), this protein is FMRFamide-related neuropeptides.